Reading from the N-terminus, the 352-residue chain is Protein NDRG4 (352 aa).

Serine 298, serine 317, and serine 323 each carry phosphoserine. The span at 314-323 (RTASLTSASS) shows a compositional bias: low complexity. The disordered stretch occupies residues 314–352 (RTASLTSASSVDGSRPQACTHSESSEGLGQVNHTMEVSC). Polar residues predominate over residues 330-352 (QACTHSESSEGLGQVNHTMEVSC).

This sequence belongs to the NDRG family. In terms of processing, phosphorylated in an aortic smooth muscle cell line, following PDGF treatment. Expressed predominantly in brain and heart (at protein level). In the brain, detected in astrocytes. Isoform 1 and isoform 2 are only expressed in brain. Isoform 3 is expressed in both heart and brain. Up-regulated in glioblastoma multiforme cells.

It is found in the cytoplasm. The protein localises to the cytosol. Its function is as follows. Contributes to the maintenance of intracerebral BDNF levels within the normal range, which is necessary for the preservation of spatial learning and the resistance to neuronal cell death caused by ischemic stress. May enhance growth factor-induced ERK1 and ERK2 phosphorylation, including that induced by PDGF and FGF. May attenuate NGF-promoted ELK1 phosphorylation in a microtubule-dependent manner. The polypeptide is Protein NDRG4 (NDRG4) (Homo sapiens (Human)).